Consider the following 545-residue polypeptide: Cytochrome P450 10 (545 aa).

C493 serves as a coordination point for heme.

It belongs to the cytochrome P450 family. It depends on heme as a cofactor. In terms of tissue distribution, abundantly expressed in the female gonadotropic hormone producing dorsal bodies.

May be involved in the synthesis of the female gonadotropic hormone produced by the dorsal bodies. This chain is Cytochrome P450 10 (CYP10), found in Lymnaea stagnalis (Great pond snail).